A 197-amino-acid chain; its full sequence is Dephospho-CoA kinase (197 aa).

A DPCK domain is found at 2–197; that stretch reads IIGITGGIAS…SALLSLANPR (196 aa). ATP is bound at residue 10–15; it reads ASGKST.

This sequence belongs to the CoaE family.

Its subcellular location is the cytoplasm. It carries out the reaction 3'-dephospho-CoA + ATP = ADP + CoA + H(+). Its pathway is cofactor biosynthesis; coenzyme A biosynthesis; CoA from (R)-pantothenate: step 5/5. Functionally, catalyzes the phosphorylation of the 3'-hydroxyl group of dephosphocoenzyme A to form coenzyme A. In Streptococcus pyogenes serotype M3 (strain ATCC BAA-595 / MGAS315), this protein is Dephospho-CoA kinase.